The sequence spans 264 residues: Cell division protein FtsQ (264 aa).

The segment at 1–24 (MAGPTTAERGDRQQESSGPPPARW) is disordered. At 1–31 (MAGPTTAERGDRQQESSGPPPARWSGTRRLR) the chain is on the cytoplasmic side. The chain crosses the membrane as a helical span at residues 32–52 (ALVVLAALLVLLAGGCAWLLY). Topologically, residues 53 to 264 (GSSWLRLERV…VPTAPASSGS (212 aa)) are extracellular. The POTRA domain occupies 57–126 (LRLERVSVSG…HGIGLKVTER (70 aa)).

It belongs to the FtsQ/DivIB family. FtsQ subfamily.

It localises to the cell membrane. Functionally, essential cell division protein. In Streptomyces collinus, this protein is Cell division protein FtsQ.